Consider the following 1321-residue polypeptide: Bile salt export pump (1321 aa).

At 1–62 (MSDSVILRSV…FSSSKDNWLM (62 aa)) the chain is on the cytoplasmic side. The ABC transmembrane type-1 1 domain occupies 62-385 (MFMGSVCALL…ASSCLEIFST (324 aa)). A helical membrane pass occupies residues 63 to 83 (FMGSVCALLHGMAQPGMIIVF). Residues 84-147 (GILTDIFVEY…VIKFSGIYAG (64 aa)) are Extracellular-facing. Residues Asn-109, Asn-116, Asn-122, and Asn-125 are each glycosylated (N-linked (GlcNAc...) asparagine). A helical transmembrane segment spans residues 148–168 (VGVAVLILGYFQIRLWVITGA). The Cytoplasmic segment spans residues 169–215 (RQIRKMRKFYFRRIMRMEIGWFDCTSVGELNSRFSDDINKIDEAIAD). A helical membrane pass occupies residues 216–236 (QMALFLQRLSTALSGLLLGFY). The Extracellular segment spans residues 237–240 (RGWK). A helical transmembrane segment spans residues 241-261 (LTLVILAVSPLIGIGAAVIGL). Residues 262–319 (SVAKFTELELKAYAKAGSIADEVLSSIRTVAAFGGENKEVERYEKNLMFAQRWGIWKG) are Cytoplasmic-facing. Residues 320-340 (MVMGFFTGYMWCLIFFCYALA) form a helical membrane-spanning segment. Residues 341-353 (FWYGSRLVLDEGE) are Extracellular-facing. The chain crosses the membrane as a helical span at residues 354–374 (YTPGTLIQIFLCVIIAAMNIG). At 375-755 (NASSCLEIFS…KYNISEWPYI (381 aa)) the chain is on the cytoplasmic side. Residues 420 to 656 (IEFHNVTFHY…KGVYFMLVTL (237 aa)) form the ABC transporter 1 domain. Residue 455 to 462 (GSSGAGKS) participates in ATP binding. A Phosphothreonine modification is found at Thr-586. Ser-587 carries the post-translational modification Phosphoserine. Positions 651–674 (FMLVTLQSQEDNTHKETGIKGKDT) are interaction with HAX1. Basic and acidic residues predominate over residues 662-684 (NTHKETGIKGKDTTEGDTPERTF). The segment at 662–722 (NTHKETGIKG…PLAIGDHKSS (61 aa)) is disordered. Residues Ser-692, Ser-703, and Ser-706 each carry the phosphoserine modification. Residues 755 to 1043 (ILVGALCAAI…TFSYTPSYAK (289 aa)) enclose the ABC transmembrane type-1 2 domain. The chain crosses the membrane as a helical span at residues 756–776 (LVGALCAAINGAVTPIYSLLF). The Extracellular segment spans residues 777–794 (SQILKTFSLVDKEQQRSE). A helical transmembrane segment spans residues 795–815 (IYSMCLFFVILGCVSLFTQFL). The Cytoplasmic segment spans residues 816 to 869 (QGYNFAKSGELLTKRLRKFGFKAMLRQDIGWFDDLKNNPGVLTTRLATDASQVQ). Helical transmembrane passes span 870–890 (GATG…FVAV) and 891–911 (LIAF…FPFL). Residues 912–979 (ALSGAVQTKM…SYKTAIRKAN (68 aa)) are Cytoplasmic-facing. A helical transmembrane segment spans residues 980-1000 (VYGLCYAFSQGISFLANSAAY). Topologically, residues 1001 to 1011 (RYGGYLIVYED) are extracellular. Residues 1012–1032 (LNFSYVFRVVSSIAMSATAVG) traverse the membrane as a helical segment. Residues 1033 to 1321 (RTFSYTPSYA…KLVITGAPIS (289 aa)) lie on the Cytoplasmic side of the membrane. Residues 1078 to 1316 (IDFIDCKFTY…KGAYYKLVIT (239 aa)) enclose the ABC transporter 2 domain. Residue 1113-1120 (GSSGCGKS) participates in ATP binding. Ser-1321 is modified (phosphoserine).

The protein belongs to the ABC transporter superfamily. ABCB family. Multidrug resistance exporter (TC 3.A.1.201) subfamily. In terms of assembly, interacts with HAX1. Interacts with the adapter protein complex 2 (AP-2) throught AP2A2 or AP2A1; this interaction regulates cell membrane expression of ABCB11 through its internalization in a clathrin-dependent manner and its subsequent degradation. In terms of processing, N-glycosylated. Post-translationally, ubiquitinated; short-chain ubiquitination regulates cell-Surface expression of ABCB11. As to expression, expressed predominantly, if not exclusively in the liver, where it was further localized to the canalicular microvilli and to subcanalicular vesicles of the hepatocytes by in situ.

Its subcellular location is the apical cell membrane. It localises to the recycling endosome membrane. The protein localises to the endosome. The protein resides in the cell membrane. It catalyses the reaction cholate(in) + ATP + H2O = cholate(out) + ADP + phosphate + H(+). It carries out the reaction taurocholate(in) + ATP + H2O = taurocholate(out) + ADP + phosphate + H(+). The catalysed reaction is glycocholate(in) + ATP + H2O = glycocholate(out) + ADP + phosphate + H(+). The enzyme catalyses glycochenodeoxycholate(in) + ATP + H2O = glycochenodeoxycholate(out) + ADP + phosphate + H(+). It catalyses the reaction taurochenodeoxycholate(in) + ATP + H2O = taurochenodeoxycholate(out) + ADP + phosphate + H(+). It carries out the reaction glycoursodeoxycholate(in) + ATP + H2O = glycoursodeoxycholate(out) + ADP + phosphate + H(+). The catalysed reaction is tauroursodeoxycholate(in) + ATP + H2O = tauroursodeoxycholate(out) + ADP + phosphate + H(+). The enzyme catalyses taurodeoxycholate(in) + ATP + H2O = taurodeoxycholate(out) + ADP + phosphate + H(+). It catalyses the reaction taurolithocholate 3-sulfate(in) + ATP + H2O = taurolithocholate 3-sulfate(out) + ADP + phosphate + H(+). It carries out the reaction pravastatin(in) + ATP + H2O = pravastatin(out) + ADP + phosphate + H(+). With respect to regulation, the uptake of taurocholate is inhibited by taurolithocholate sulfate with an IC(50) of 9 uM. Pravastatin competitively inhibits the transport of taurocholic acid. Cyclosporin A, glibenclamide, rifampicin and troglitazonestrongly competitively inhibit the transport activity of taurocholate. The canalicular transport activity of taurocholate is strongly dependent on canalicular membrane cholesterol content. The uptake of taurocholate is increased by short- and medium-chain fatty acids. Cholesterol increases transport capacity of taurocholate without affecting the affinity for the substrate. Its function is as follows. Catalyzes the transport of the major hydrophobic bile salts, such as taurine and glycine-conjugated cholic acid across the canalicular membrane of hepatocytes in an ATP-dependent manner, therefore participates in hepatic bile acid homeostasis and consequently to lipid homeostasis through regulation of biliary lipid secretion in a bile salts dependent manner. Transports taurine-conjugated bile salts more rapidly than glycine-conjugated bile salts. Also transports non-bile acid compounds, such as pravastatin and fexofenadine in an ATP-dependent manner and may be involved in their biliary excretion. This is Bile salt export pump from Mus musculus (Mouse).